Consider the following 200-residue polypeptide: High mobility group protein B3 (200 aa).

Lysine 3 carries the N6-acetyllysine modification. 2 DNA-binding regions (HMG box) span residues 9–79 and 93–161; these read PKGK…KDYG and PKRP…ADYK. Cysteine 23 carries the post-translational modification Cysteine sulfonic acid (-SO3H); alternate. A disulfide bond links cysteine 23 and cysteine 45. 2 positions are modified to N6-acetyllysine: lysine 30 and lysine 43. Cysteine 45 bears the Cysteine sulfonic acid (-SO3H); alternate mark. The disordered stretch occupies residues 71-97; sequence YDREMKDYGPAKGGKKKKDPNAPKRPP. At serine 98 the chain carries Phosphoserine. Residue cysteine 104 is modified to Cysteine sulfonic acid (-SO3H). Lysine 112 and lysine 139 each carry N6-acetyllysine. Positions 163 to 200 are disordered; the sequence is KGKFDGAKGAAKVARKKVEEEDEEDEEEEEEEEEEEDE. Positions 182 to 200 are enriched in acidic residues; it reads EEDEEDEEEEEEEEEEEDE.

This sequence belongs to the HMGB family. Reduction/oxidation of cysteine residues Cys-23, Cys-45 and Cys-104 and a possible intramolecular disulfide bond involving Cys-23 and Cys-45 give rise to different redox forms with specific functional activities in various cellular compartments: 1- fully reduced HMGB3 (HMGB3C23hC45hC104h), 2- disulfide HMGB3 (HMGB3C23-C45C104h) and 3- sulfonyl HMGB3 (HMGB3C23soC45soC104so).

It is found in the nucleus. It localises to the chromosome. The protein resides in the cytoplasm. Multifunctional protein with various roles in different cellular compartments. May act in a redox sensitive manner. Associates with chromatin and binds DNA with a preference for non-canonical DNA structures such as single-stranded DNA. Can bend DNA and enhance DNA flexibility by looping thus providing a mechanism to promote activities on various gene promoters. Proposed to be involved in the innate immune response to nucleic acids by acting as a cytoplasmic promiscuous immunogenic DNA/RNA sensor. Negatively regulates B-cell and myeloid cell differentiation. In hematopoietic stem cells may regulate the balance between self-renewal and differentiation. Involved in negative regulation of canonical Wnt signaling. This is High mobility group protein B3 (HMGB3) from Bos taurus (Bovine).